Reading from the N-terminus, the 228-residue chain is C-type lectin domain-containing protein 88 (228 aa).

Positions 1–18 (MQFIFFGTLFSGLLLVCA) are cleaved as a signal peptide. O-linked (Xyl...) (chondroitin sulfate) serine glycosylation occurs at Ser27. Residues 88–218 (YSDSCYWVET…CTYLFYSICE (131 aa)) form the C-type lectin domain. Cystine bridges form between Cys109–Cys217 and Cys188–Cys209. Residue Asn220 is glycosylated (N-linked (GlcNAc...) asparagine).

The chain is C-type lectin domain-containing protein 88 from Caenorhabditis elegans.